The chain runs to 552 residues: uncharacterized protein (552 aa).

29–36 (GENAWGKS) is an ATP binding site. The 91-residue stretch at 379 to 469 (RCWLLVEGET…AEREHLTALP (91 aa)) folds into the Toprim domain.

This is an uncharacterized protein from Escherichia coli (strain K12).